The sequence spans 283 residues: CDP-abequose synthase (283 aa).

Residues 7-13 (GGSGYIG), 48-49 (EF), Tyr129, and Lys133 contribute to the NAD(+) site. Catalysis depends on Tyr129, which acts as the Proton acceptor.

The protein belongs to the NAD(P)-dependent epimerase/dehydratase family.

It carries out the reaction CDP-alpha-D-abequose + NADP(+) = CDP-4-dehydro-3,6-dideoxy-alpha-D-glucose + NADPH + H(+). It participates in bacterial outer membrane biogenesis; LPS O-antigen biosynthesis. In terms of biological role, the CDP-abequose synthase is involved in lipopolysaccharides (LPS) synthesis containing abequose which are important antigens of the cell surface responsible for the serological O specificity. Derivatives of the 3,6-dideoxyhexose group have a particular highly immunogenic character. The protein is CDP-abequose synthase (rfbJ) of Yersinia pseudotuberculosis.